The chain runs to 348 residues: Protein DMR6-LIKE OXYGENASE 2 (348 aa).

The Fe2OG dioxygenase domain occupies 194–294 (KHGQHMAINY…RISIPTFYCP (101 aa)). The Fe cation site is built by His219, Asp221, and His275. Arg285 is a binding site for 2-oxoglutarate.

The protein belongs to the iron/ascorbate-dependent oxidoreductase family. Fe(2+) is required as a cofactor.

The enzyme catalyses salicylate + NADH + O2 + H(+) = 2,3-dihydroxybenzoate + NAD(+) + H2O. In terms of biological role, converts salicylic acid (SA) to 2,3-dihydroxybenzoic acid (2,3-DHBA). Negative regulator of defense against Hyaloperonospora arabidopsidis. Its function is as follows. (Microbial infection) Confers susceptibility to the downy mildew pathogen Hyaloperonospora arabidopsidis. The polypeptide is Protein DMR6-LIKE OXYGENASE 2 (Arabidopsis thaliana (Mouse-ear cress)).